Here is a 235-residue protein sequence, read N- to C-terminus: Segregation and condensation protein A (235 aa).

The protein belongs to the ScpA family. Component of a cohesin-like complex composed of ScpA, ScpB and the Smc homodimer, in which ScpA and ScpB bind to the head domain of Smc. The presence of the three proteins is required for the association of the complex with DNA.

It localises to the cytoplasm. In terms of biological role, participates in chromosomal partition during cell division. May act via the formation of a condensin-like complex containing Smc and ScpB that pull DNA away from mid-cell into both cell halves. This chain is Segregation and condensation protein A, found in Streptococcus equi subsp. zooepidemicus (strain H70).